Reading from the N-terminus, the 522-residue chain is Zinc finger and BTB domain-containing protein 18 (522 aa).

Residues 24–91 enclose the BTB domain; the sequence is CDCTVLVGDA…MYEGKLQFKD (68 aa). The span at 121-143 shows a compositional bias: basic and acidic residues; the sequence is ATTEADSTKKEEDASSCSDKVES. The tract at residues 121-166 is disordered; it reads ATTEADSTKKEEDASSCSDKVESLSDGSSHMAGDLPSDEDEGEDDK. Ser157 is subject to Phosphoserine. Lys273 participates in a covalent cross-link: Glycyl lysine isopeptide (Lys-Gly) (interchain with G-Cter in SUMO2). Positions 310–427 are interaction with DNMT3A; the sequence is EPAHLAPLRE…TFSCMYTLKR (118 aa). 4 consecutive C2H2-type zinc fingers follow at residues 370–392, 410–432, 438–460, and 466–489; these read FMCP…LSTH, PTCS…ERTH, YTCT…AVVH, and HACK…RKFH. A phosphoserine mark is found at Ser516 and Ser517.

It belongs to the krueppel C2H2-type zinc-finger protein family. ZBTB18 subfamily. Interacts with DNMT3A.

It is found in the nucleus. Transcriptional repressor that plays a role in various developmental processes such as myogenesis and brain development. Specifically binds the consensus DNA sequence 5'-[AC]ACATCTG[GT][AC]-3' which contains the E box core, and acts by recruiting chromatin remodeling multiprotein complexes. Plays a key role in myogenesis by directly repressing the expression of ID2 and ID3, 2 inhibitors of skeletal myogenesis. Also involved in controlling cell division of progenitor cells and regulating the survival of postmitotic cortical neurons. May also play a role in the organization of chromosomes in the nucleus. This chain is Zinc finger and BTB domain-containing protein 18 (Zbtb18), found in Rattus norvegicus (Rat).